We begin with the raw amino-acid sequence, 193 residues long: Ribose 1,5-bisphosphate phosphokinase PhnN (193 aa).

9-16 lines the ATP pocket; the sequence is GPSGAGKD.

The protein belongs to the ribose 1,5-bisphosphokinase family.

The catalysed reaction is alpha-D-ribose 1,5-bisphosphate + ATP = 5-phospho-alpha-D-ribose 1-diphosphate + ADP. It participates in metabolic intermediate biosynthesis; 5-phospho-alpha-D-ribose 1-diphosphate biosynthesis; 5-phospho-alpha-D-ribose 1-diphosphate from D-ribose 5-phosphate (route II): step 3/3. Its function is as follows. Catalyzes the phosphorylation of ribose 1,5-bisphosphate to 5-phospho-D-ribosyl alpha-1-diphosphate (PRPP). The polypeptide is Ribose 1,5-bisphosphate phosphokinase PhnN (Yersinia pestis).